Here is a 241-residue protein sequence, read N- to C-terminus: Tryptophan synthase alpha chain (241 aa).

Residues Glu-31 and Asp-42 each act as proton acceptor in the active site.

The protein belongs to the TrpA family. As to quaternary structure, tetramer of two alpha and two beta chains.

It catalyses the reaction (1S,2R)-1-C-(indol-3-yl)glycerol 3-phosphate + L-serine = D-glyceraldehyde 3-phosphate + L-tryptophan + H2O. It functions in the pathway amino-acid biosynthesis; L-tryptophan biosynthesis; L-tryptophan from chorismate: step 5/5. In terms of biological role, the alpha subunit is responsible for the aldol cleavage of indoleglycerol phosphate to indole and glyceraldehyde 3-phosphate. This is Tryptophan synthase alpha chain from Staphylococcus saprophyticus subsp. saprophyticus (strain ATCC 15305 / DSM 20229 / NCIMB 8711 / NCTC 7292 / S-41).